We begin with the raw amino-acid sequence, 428 residues long: MTEIIEVHAREILDSRGNPTVEAEVTLLSGISGRASVPSGASTGEHEMLELRDGDPKRYLGKGVTQAVNNVIEKIAPEIVGMDCLNQRDIDYTMIALDGTENKGALGANAILSVSIACAKAAAAVVELPLYRYLGGVQAKDIPVPMMNIINGGQHADNNVDIQEFMIMPVGAPTFREGLRMSAEVFHNLKAVLKGKGYNTAVGDEGGFAPNLASNEEALAVIMAAITRAGYEPGKDIAIALDAAASSFYEKGKYILAAEKKPEKTADEMIRFYEDLANRYPIISLEDGLAEDDWEGWKALTQAMGSRIQIVGDDLFVTNKKRLEQGISKGIANSILIKLNQIGSLTETLETIQTAKEAGYTNVVSHRSGETEDSFMADVAVAANCGQIKSGSLSRSERLAKYNQLLRIEEELGDRAVYRGRSALYSVR.

Residue Gln-163 participates in (2R)-2-phosphoglycerate binding. Residue Glu-205 is the Proton donor of the active site. The Mg(2+) site is built by Asp-242, Glu-286, and Asp-313. (2R)-2-phosphoglycerate is bound by residues Lys-338, Arg-367, Ser-368, and Lys-389. Catalysis depends on Lys-338, which acts as the Proton acceptor.

Belongs to the enolase family. Requires Mg(2+) as cofactor.

It localises to the cytoplasm. Its subcellular location is the secreted. It is found in the cell surface. It carries out the reaction (2R)-2-phosphoglycerate = phosphoenolpyruvate + H2O. It functions in the pathway carbohydrate degradation; glycolysis; pyruvate from D-glyceraldehyde 3-phosphate: step 4/5. Its function is as follows. Catalyzes the reversible conversion of 2-phosphoglycerate (2-PG) into phosphoenolpyruvate (PEP). It is essential for the degradation of carbohydrates via glycolysis. The polypeptide is Enolase (Syntrophus aciditrophicus (strain SB)).